Here is a 312-residue protein sequence, read N- to C-terminus: uncharacterized protein (312 aa).

The 58-residue stretch at 8–65 (PGLTCFEIFLAIAEAGSLGGAARELGLTQQAVSRRLASMEAQIGVRLAIRTTRGSQLT) folds into the HTH lysR-type domain. The H-T-H motif DNA-binding region spans 25–45 (LGGAARELGLTQQAVSRRLAS).

It belongs to the LysR transcriptional regulatory family.

This is an uncharacterized protein from Mycobacterium tuberculosis (strain CDC 1551 / Oshkosh).